Consider the following 497-residue polypeptide: Lysine--tRNA ligase (497 aa).

Residues Glu409 and Glu416 each contribute to the Mg(2+) site.

The protein belongs to the class-II aminoacyl-tRNA synthetase family. In terms of assembly, homodimer. The cofactor is Mg(2+).

It is found in the cytoplasm. It carries out the reaction tRNA(Lys) + L-lysine + ATP = L-lysyl-tRNA(Lys) + AMP + diphosphate. The polypeptide is Lysine--tRNA ligase (Streptococcus pyogenes serotype M6 (strain ATCC BAA-946 / MGAS10394)).